The chain runs to 202 residues: Securin (202 aa).

Residues 36–55 (DGRSQVSTPHVGKMFDAPPA) form a disordered region. The D-box motif lies at 61-64 (RKAL). 2 short sequence motifs (TEK-box) span residues 71–73 (TEK) and 94–96 (TEK). Residues 163-173 (PPSPLKMPPLL) carry the SH3-binding motif. Serine 165 bears the Phosphoserine; by CDK1 mark.

The protein belongs to the securin family. As to quaternary structure, interacts with RPS10 and DNAJA1. Interacts with the caspase-like ESPL1, and prevents its protease activity probably by covering its active site. Interacts with TP53 and blocks its activity probably by blocking its binding to DNA. Interacts with the Ku 70 kDa subunit of ds-DNA kinase. Interacts with PTTG1IP. Phosphorylated at Ser-165 by CDK1 during mitosis. In terms of processing, phosphorylated in vitro by ds-DNA kinase. Post-translationally, ubiquitinated through 'Lys-11' linkage of ubiquitin moieties by the anaphase promoting complex (APC) at the onset of anaphase, conducting to its degradation. 'Lys-11'-linked ubiquitination is mediated by the E2 ligase UBE2C/UBCH10.

The protein localises to the cytoplasm. Its subcellular location is the nucleus. In terms of biological role, regulatory protein, which plays a central role in chromosome stability, in the p53/TP53 pathway, and DNA repair. Probably acts by blocking the action of key proteins. During the mitosis, it blocks Separase/ESPL1 function, preventing the proteolysis of the cohesin complex and the subsequent segregation of the chromosomes. At the onset of anaphase, it is ubiquitinated, conducting to its destruction and to the liberation of ESPL1. Its function is however not limited to a blocking activity, since it is required to activate ESPL1. Negatively regulates the transcriptional activity and related apoptosis activity of TP53. The negative regulation of TP53 may explain the strong transforming capability of the protein when it is overexpressed. May also play a role in DNA repair via its interaction with Ku, possibly by connecting DNA damage-response pathways with sister chromatid separation. This is Securin (PTTG1) from Bos taurus (Bovine).